An 886-amino-acid chain; its full sequence is Alanine--tRNA ligase (886 aa).

Zn(2+) contacts are provided by His564, His568, Cys666, and His670.

The protein belongs to the class-II aminoacyl-tRNA synthetase family. The cofactor is Zn(2+).

Its subcellular location is the cytoplasm. It carries out the reaction tRNA(Ala) + L-alanine + ATP = L-alanyl-tRNA(Ala) + AMP + diphosphate. Catalyzes the attachment of alanine to tRNA(Ala) in a two-step reaction: alanine is first activated by ATP to form Ala-AMP and then transferred to the acceptor end of tRNA(Ala). Also edits incorrectly charged Ser-tRNA(Ala) and Gly-tRNA(Ala) via its editing domain. This is Alanine--tRNA ligase from Prochlorococcus marinus (strain MIT 9301).